Here is a 147-residue protein sequence, read N- to C-terminus: Large ribosomal subunit protein uL16 (147 aa).

The protein belongs to the universal ribosomal protein uL16 family. As to quaternary structure, part of the 50S ribosomal subunit.

In terms of biological role, binds 23S rRNA and is also seen to make contacts with the A and possibly P site tRNAs. This Caldicellulosiruptor saccharolyticus (strain ATCC 43494 / DSM 8903 / Tp8T 6331) protein is Large ribosomal subunit protein uL16.